We begin with the raw amino-acid sequence, 132 residues long: Large ribosomal subunit protein uL14 (132 aa).

It belongs to the universal ribosomal protein uL14 family. In terms of assembly, part of the 50S ribosomal subunit. Forms a cluster with proteins L3 and L24e, part of which may contact the 16S rRNA in 2 intersubunit bridges.

Binds to 23S rRNA. Forms part of two intersubunit bridges in the 70S ribosome. The polypeptide is Large ribosomal subunit protein uL14 (Methanosarcina acetivorans (strain ATCC 35395 / DSM 2834 / JCM 12185 / C2A)).